Here is a 325-residue protein sequence, read N- to C-terminus: tRNA N6-adenosine threonylcarbamoyltransferase (325 aa).

Fe cation-binding residues include His107, His111, and Tyr127. Substrate contacts are provided by residues 127–131, Asp159, Gly172, Glu176, and Asn257; that span reads YVSGG. Position 285 (Asp285) interacts with Fe cation.

The protein belongs to the KAE1 / TsaD family. Monomer. Component of the KEOPS complex that consists of Kae1, Bud32, Cgi121 and Pcc1; the whole complex dimerizes. The cofactor is Fe(2+).

It localises to the cytoplasm. It carries out the reaction L-threonylcarbamoyladenylate + adenosine(37) in tRNA = N(6)-L-threonylcarbamoyladenosine(37) in tRNA + AMP + H(+). Required for the formation of a threonylcarbamoyl group on adenosine at position 37 (t(6)A37) in tRNAs that read codons beginning with adenine. Is a component of the KEOPS complex that is probably involved in the transfer of the threonylcarbamoyl moiety of threonylcarbamoyl-AMP (TC-AMP) to the N6 group of A37. Kae1 likely plays a direct catalytic role in this reaction, but requires other protein(s) of the complex to fulfill this activity. In Thermococcus kodakarensis (strain ATCC BAA-918 / JCM 12380 / KOD1) (Pyrococcus kodakaraensis (strain KOD1)), this protein is tRNA N6-adenosine threonylcarbamoyltransferase.